Reading from the N-terminus, the 278-residue chain is Large ribosomal subunit protein uL2 (278 aa).

2 disordered regions span residues 33 to 53 and 219 to 278; these read LTEGKRKTGGRNNKGHVTSRG and LTRG…KKKR. The segment covering 269 to 278 has biased composition (basic residues); the sequence is IRSRHAKKKR.

The protein belongs to the universal ribosomal protein uL2 family. Part of the 50S ribosomal subunit. Forms a bridge to the 30S subunit in the 70S ribosome.

In terms of biological role, one of the primary rRNA binding proteins. Required for association of the 30S and 50S subunits to form the 70S ribosome, for tRNA binding and peptide bond formation. It has been suggested to have peptidyltransferase activity; this is somewhat controversial. Makes several contacts with the 16S rRNA in the 70S ribosome. The sequence is that of Large ribosomal subunit protein uL2 from Sphingopyxis alaskensis (strain DSM 13593 / LMG 18877 / RB2256) (Sphingomonas alaskensis).